We begin with the raw amino-acid sequence, 318 residues long: Ferrochelatase (318 aa).

Residues His-186 and Glu-264 each coordinate Fe cation.

Belongs to the ferrochelatase family.

It is found in the cytoplasm. It catalyses the reaction heme b + 2 H(+) = protoporphyrin IX + Fe(2+). It participates in porphyrin-containing compound metabolism; protoheme biosynthesis; protoheme from protoporphyrin-IX: step 1/1. Catalyzes the ferrous insertion into protoporphyrin IX. This Chlamydia felis (strain Fe/C-56) (Chlamydophila felis) protein is Ferrochelatase.